Here is a 588-residue protein sequence, read N- to C-terminus: Myc box-dependent-interacting protein 1 (588 aa).

Alanine 2 is subject to N-acetylalanine. The interval 2-122 (AEMGSKGVTA…DYHQKLVDQA (121 aa)) is interaction with BIN2. 2 coiled-coil regions span residues 15-42 (ASNV…TKDE) and 193-274 (HLVA…EKQH). Residues 29–276 (VLQKLGKADE…LVSLEKQHGS (248 aa)) form the BAR domain. The interval 279–355 (FTVKAQPSDS…PKHTPSKEMK (77 aa)) is disordered. A phosphoserine mark is found at serine 296, serine 298, and serine 304. Threonine 308 carries the post-translational modification Phosphothreonine. 2 positions are modified to phosphoserine: serine 324 and serine 332. The clathrin-binding stretch occupies residues 379 to 422 (FEAPGPFSEQASLLDLDFEPLPPVASPVKAPTPSGQSIPWDLWE). A disordered region spans residues 448-483 (PSQTAEPGPAQPAEASEVVGGTQEPGETAASEATSS). Over residues 474 to 483 (ETAASEATSS) the composition is skewed to low complexity. Residues 515–588 (GFMFKVQAQH…FPENFTERVQ (74 aa)) enclose the SH3 domain.

As to quaternary structure, heterodimer with AMPH. Binds SH3GLB1. Interacts (via SH3 domain) with DNM1. Interacts with SYNJ1. Interacts (via SH3 domain) with DNM2. Interacts with CLTC. Interacts with AP2A2. Interacts with AP2B1. Interacts with MYC (via N-terminal transactivation domain); the interaction requires the integrity of the conserved MYC box regions 1 and 2. Interacts with BIN2. Interacts with SNX4. Interacts (via BAR domain) with BACE1. Binds (via BAR domain) F-actin. Phosphorylated by protein kinase C. Highly expressed in the brain and muscle. Isoform AMPH2-1 is expressed only in the brain where it is concentrated in axon initial segments and nodes of Ranvier. Isoform AMPH2-2 is widely expressed.

It localises to the nucleus. Its subcellular location is the cytoplasm. The protein resides in the endosome. It is found in the cell membrane. The protein localises to the sarcolemma. It localises to the T-tubule. In terms of biological role, is a key player in the control of plasma membrane curvature, and membrane shaping and remodeling. Required in muscle cells for the formation of T-tubules, tubular invaginations of the plasma membrane that function in depolarization-contraction coupling. Required in muscle cells for the formation of T-tubules, tubular invaginations of the plasma membrane that function in depolarization-contraction coupling. Is a negative regulator of endocytosis. Is also involved in the regulation of intracellular vesicles sorting, modulation of BACE1 trafficking and the control of amyloid-beta production. In neuronal circuits, endocytosis regulation may influence the internalization of PHF-tau aggregates. May be involved in the regulation of MYC activity and the control cell proliferation. The protein is Myc box-dependent-interacting protein 1 (Bin1) of Rattus norvegicus (Rat).